Consider the following 301-residue polypeptide: Ubiquinone biosynthesis protein COQ4, mitochondrial (301 aa).

The transit peptide at 1–46 (MEVTLKRSAALARQTTPLLRPLRPVATYPSNNNNNNNPTPQQRRPY) directs the protein to the mitochondrion. The interval 14–48 (QTTPLLRPLRPVATYPSNNNNNNNPTPQQRRPYSL) is disordered. A compositionally biased stretch (polar residues) spans 38 to 48 (PTPQQRRPYSL). Zn(2+) contacts are provided by histidine 185, aspartate 186, histidine 189, and glutamate 201.

This sequence belongs to the COQ4 family. As to quaternary structure, component of a multi-subunit COQ enzyme complex, composed of at least COQ3, COQ4, COQ5, COQ6, COQ7 and COQ9. It depends on Zn(2+) as a cofactor.

It localises to the mitochondrion inner membrane. It catalyses the reaction a 4-hydroxy-3-methoxy-5-(all-trans-polyprenyl)benzoate + H(+) = a 2-methoxy-6-(all-trans-polyprenyl)phenol + CO2. The protein operates within cofactor biosynthesis; ubiquinone biosynthesis. Functionally, lyase that catalyzes the C1-decarboxylation of 4-hydroxy-3-methoxy-5-(all-trans-polyprenyl)benzoic acid into 2-methoxy-6-(all-trans-polyprenyl)phenol during ubiquinone biosynthesis. The polypeptide is Ubiquinone biosynthesis protein COQ4, mitochondrial (Podospora anserina (strain S / ATCC MYA-4624 / DSM 980 / FGSC 10383) (Pleurage anserina)).